A 504-amino-acid chain; its full sequence is Arabinose import ATP-binding protein AraG (504 aa).

ABC transporter domains follow at residues 8–243 and 256–499; these read LSFR…MVGR and YGEE…MPKV. Position 40-47 (40-47) interacts with ATP; it reads GENGAGKS.

The protein belongs to the ABC transporter superfamily. Arabinose importer (TC 3.A.1.2.2) family. The complex is composed of two ATP-binding proteins (AraG), two transmembrane proteins (AraH) and a solute-binding protein (AraF).

The protein localises to the cell inner membrane. The catalysed reaction is L-arabinose(out) + ATP + H2O = L-arabinose(in) + ADP + phosphate + H(+). Functionally, part of the ABC transporter complex AraFGH involved in arabinose import. Responsible for energy coupling to the transport system. This Shigella flexneri protein is Arabinose import ATP-binding protein AraG.